We begin with the raw amino-acid sequence, 142 residues long: Large ribosomal subunit protein uL11 (142 aa).

The protein belongs to the universal ribosomal protein uL11 family. As to quaternary structure, part of the ribosomal stalk of the 50S ribosomal subunit. Interacts with L10 and the large rRNA to form the base of the stalk. L10 forms an elongated spine to which L12 dimers bind in a sequential fashion forming a multimeric L10(L12)X complex. Post-translationally, one or more lysine residues are methylated.

Forms part of the ribosomal stalk which helps the ribosome interact with GTP-bound translation factors. In Maricaulis maris (strain MCS10) (Caulobacter maris), this protein is Large ribosomal subunit protein uL11.